A 242-amino-acid chain; its full sequence is MTTVSMREMLQAGVHFGHQTRYWNPKMKPFIFGARNGVHIINLEHTVPMFNEALAFISNVASKKGKVLFVGTKRAASEAIKEAAVSCDQFYVDHRWLGGMLTNWKTVRQSIKRLKDLESQSVDGTFDKLTKKEALMRTRELDKLEKSLGGIKNMAGLPDVIFVIGADHEHIAIKEANNLGIPVVAVVDTNSSPDGINYIIPGNDDAMRSIRLYTGSVAAAAKAGRGQDLAVQAEQDGFVEAE.

The protein belongs to the universal ribosomal protein uS2 family.

The polypeptide is Small ribosomal subunit protein uS2 (Shewanella halifaxensis (strain HAW-EB4)).